A 95-amino-acid chain; its full sequence is Co-chaperonin GroES (95 aa).

Belongs to the GroES chaperonin family. In terms of assembly, heptamer of 7 subunits arranged in a ring. Interacts with the chaperonin GroEL.

The protein localises to the cytoplasm. Its function is as follows. Together with the chaperonin GroEL, plays an essential role in assisting protein folding. The GroEL-GroES system forms a nano-cage that allows encapsulation of the non-native substrate proteins and provides a physical environment optimized to promote and accelerate protein folding. GroES binds to the apical surface of the GroEL ring, thereby capping the opening of the GroEL channel. The chain is Co-chaperonin GroES from Pseudoalteromonas translucida (strain TAC 125).